The chain runs to 177 residues: Large ribosomal subunit protein uL6 (177 aa).

The protein belongs to the universal ribosomal protein uL6 family. Part of the 50S ribosomal subunit.

Its function is as follows. This protein binds to the 23S rRNA, and is important in its secondary structure. It is located near the subunit interface in the base of the L7/L12 stalk, and near the tRNA binding site of the peptidyltransferase center. This is Large ribosomal subunit protein uL6 from Paracoccus denitrificans (strain Pd 1222).